Here is a 160-residue protein sequence, read N- to C-terminus: ATP synthase subunit b (160 aa).

A helical transmembrane segment spans residues 12 to 32; the sequence is ISFVLFVWFCMKYVWYPFISI.

This sequence belongs to the ATPase B chain family. F-type ATPases have 2 components, F(1) - the catalytic core - and F(0) - the membrane proton channel. F(1) has five subunits: alpha(3), beta(3), gamma(1), delta(1), epsilon(1). F(0) has three main subunits: a(1), b(2) and c(10-14). The alpha and beta chains form an alternating ring which encloses part of the gamma chain. F(1) is attached to F(0) by a central stalk formed by the gamma and epsilon chains, while a peripheral stalk is formed by the delta and b chains.

It is found in the cell inner membrane. F(1)F(0) ATP synthase produces ATP from ADP in the presence of a proton or sodium gradient. F-type ATPases consist of two structural domains, F(1) containing the extramembraneous catalytic core and F(0) containing the membrane proton channel, linked together by a central stalk and a peripheral stalk. During catalysis, ATP synthesis in the catalytic domain of F(1) is coupled via a rotary mechanism of the central stalk subunits to proton translocation. Its function is as follows. Component of the F(0) channel, it forms part of the peripheral stalk, linking F(1) to F(0). The polypeptide is ATP synthase subunit b (Blochmanniella pennsylvanica (strain BPEN)).